We begin with the raw amino-acid sequence, 98 residues long: MMRLNWQIRQVQLLLERLGLQQLVWMDCLVMMLNKAIFLDRDGVINKRLIGDYVKKIEEFELLPNVREALIEFKKMGYLLIVVTNQQGSKQFLIFYNL.

This is an uncharacterized protein from Methanocaldococcus jannaschii (strain ATCC 43067 / DSM 2661 / JAL-1 / JCM 10045 / NBRC 100440) (Methanococcus jannaschii).